Here is a 444-residue protein sequence, read N- to C-terminus: ATP-dependent protease ATPase subunit HslU (444 aa).

Residues I18, 60-65, D256, E322, and R394 contribute to the ATP site; that span reads GVGKTE.

Belongs to the ClpX chaperone family. HslU subfamily. As to quaternary structure, a double ring-shaped homohexamer of HslV is capped on each side by a ring-shaped HslU homohexamer. The assembly of the HslU/HslV complex is dependent on binding of ATP.

It localises to the cytoplasm. Functionally, ATPase subunit of a proteasome-like degradation complex; this subunit has chaperone activity. The binding of ATP and its subsequent hydrolysis by HslU are essential for unfolding of protein substrates subsequently hydrolyzed by HslV. HslU recognizes the N-terminal part of its protein substrates and unfolds these before they are guided to HslV for hydrolysis. This is ATP-dependent protease ATPase subunit HslU from Buchnera aphidicola subsp. Cinara cedri (strain Cc).